Reading from the N-terminus, the 152-residue chain is Diamine acetyltransferase (152 aa).

The region spanning 5-152 (FEVRKATIDD…SFLDLTPKSD (148 aa)) is the N-acetyltransferase domain. Residue Y127 is the Proton donor of the active site.

The protein belongs to the acetyltransferase family. As to quaternary structure, homotetramer.

It is found in the cytoplasm. It carries out the reaction an alkane-alpha,omega-diamine + acetyl-CoA = an N-acetylalkane-alpha,omega-diamine + CoA + H(+). The protein operates within amine and polyamine degradation; putrescine degradation; N-acetylputrescine from putrescine: step 1/1. Functionally, enzyme which catalyzes the acetylation of polyamines. Displays higher substrate specificity for spermine than for spermidine. May function to acetylate host-derived polyamines, thus alleviating the necessity for de novo synthesis of these molecules. This is Diamine acetyltransferase from Cryptosporidium parvum (strain Iowa II).